The following is a 214-amino-acid chain: Phosphatidylserine decarboxylase proenzyme (214 aa).

S183 serves as the catalytic Schiff-base intermediate with substrate; via pyruvic acid. At S183 the chain carries Pyruvic acid (Ser); by autocatalysis.

Belongs to the phosphatidylserine decarboxylase family. PSD-A subfamily. Heterodimer of a large membrane-associated beta subunit and a small pyruvoyl-containing alpha subunit. It depends on pyruvate as a cofactor. In terms of processing, is synthesized initially as an inactive proenzyme. Formation of the active enzyme involves a self-maturation process in which the active site pyruvoyl group is generated from an internal serine residue via an autocatalytic post-translational modification. Two non-identical subunits are generated from the proenzyme in this reaction, and the pyruvate is formed at the N-terminus of the alpha chain, which is derived from the carboxyl end of the proenzyme. The post-translation cleavage follows an unusual pathway, termed non-hydrolytic serinolysis, in which the side chain hydroxyl group of the serine supplies its oxygen atom to form the C-terminus of the beta chain, while the remainder of the serine residue undergoes an oxidative deamination to produce ammonia and the pyruvoyl prosthetic group on the alpha chain.

It is found in the cell membrane. The enzyme catalyses a 1,2-diacyl-sn-glycero-3-phospho-L-serine + H(+) = a 1,2-diacyl-sn-glycero-3-phosphoethanolamine + CO2. The protein operates within phospholipid metabolism; phosphatidylethanolamine biosynthesis; phosphatidylethanolamine from CDP-diacylglycerol: step 2/2. Catalyzes the formation of phosphatidylethanolamine (PtdEtn) from phosphatidylserine (PtdSer). In Chlorobaculum parvum (strain DSM 263 / NCIMB 8327) (Chlorobium vibrioforme subsp. thiosulfatophilum), this protein is Phosphatidylserine decarboxylase proenzyme.